We begin with the raw amino-acid sequence, 598 residues long: Fructan 6-exohydrolase (598 aa).

An N-terminal signal peptide occupies residues 1 to 30; it reads MAARLPLAACVVAFHLCLLLSSLVRSPSTA. D65 is a catalytic residue. N-linked (GlcNAc...) asparagine glycans are attached at residues N93, N288, and N351. C451 and C497 are oxidised to a cystine. N-linked (GlcNAc...) asparagine glycosylation occurs at N572.

Belongs to the glycosyl hydrolase 32 family. In terms of tissue distribution, expressed in leaves, stems, roots and inflorescences. Maximum expression is detected in stems, particularly the penultimate internode.

It catalyses the reaction Hydrolysis of terminal, non-reducing (2-&gt;6)-linked beta-D-fructofuranose residues in fructans.. Not inhibited by sucrose. Functionally, hydrolyzes levan-type beta-(2-&gt;6)-linked fructans to fructose, but not inulin-type beta-(2-&gt;1)-linked fructans. This chain is Fructan 6-exohydrolase, found in Triticum aestivum (Wheat).